Consider the following 630-residue polypeptide: A-type voltage-gated potassium channel KCND2 (630 aa).

The Cytoplasmic portion of the chain corresponds to 1 to 184 (MAAGVAAWLP…FENPHTSTMA (184 aa)). The interval 2 to 20 (AAGVAAWLPFARAAAIGWM) is interaction with KCNIP1, KCNIP2, and other family members. T38 is modified (phosphothreonine). Residues 71 to 90 (ERDFFYHPETQQYFFDRDPD) form an interaction with KCNIP1 region. Residues H105, C111, C132, and C133 each contribute to the Zn(2+) site. A helical membrane pass occupies residues 185-206 (LVFYYVTGFFIAVSVIANVVET). The Extracellular segment spans residues 207-226 (VPCGSSPGHIKELPCGERYA). Residues 227–249 (VAFFCLDTACVMIFTVEYLLRLA) traverse the membrane as a helical segment. The Cytoplasmic segment spans residues 250–256 (AAPSRYR). Residues 257 to 281 (FVRSVMSIIDVVAILPYYIGLVMTD) traverse the membrane as a helical segment. The Extracellular segment spans residues 282–287 (NEDVSG). A helical; Voltage-sensor membrane pass occupies residues 288-307 (AFVTLRVFRVFRIFKFSRHS). Residues 308–321 (QGLRILGYTLKSCA) lie on the Cytoplasmic side of the membrane. The S4-S5 linker stretch occupies residues 308-321 (QGLRILGYTLKSCA). A helical transmembrane segment spans residues 322–345 (SELGFLLFSLTMAIIIFATVMFYA). The Extracellular portion of the chain corresponds to 346–357 (EKGSSASKFTSI). An intramembrane region (helical) is located at residues 358–369 (PAAFWYTIVTMT). Positions 370, 371, 372, and 373 each coordinate K(+). The Selectivity filter signature appears at 370–375 (TLGYGD). An intramembrane segment occupies 370-377 (TLGYGDMV). The Extracellular portion of the chain corresponds to 378–380 (PKT). The chain crosses the membrane as a helical span at residues 381–403 (IAGKIFGSICSLSGVLVIALPVP). Over 404–630 (VIVSNFSRIY…GGNIVRVSAL (227 aa)) the chain is Cytoplasmic. Residue S438 is modified to Phosphoserine. The required for dendritic targeting stretch occupies residues 474-489 (FETQHHHLLHCLEKTT). The tract at residues 474 to 630 (FETQHHHLLH…GGNIVRVSAL (157 aa)) is important for normal channel activation and inactivation, for interaction with KCNIP2, and probably other family members as well. A phosphoserine mark is found at S548, S552, S572, and S575. The tract at residues 600 to 630 (IPTPPVTTPEGDDRPESPEYSGGNIVRVSAL) is disordered. Phosphothreonine occurs at positions 602 and 607. Position 616 is a phosphoserine (S616). Residues 627–630 (VSAL) carry the PDZ-binding motif.

It belongs to the potassium channel family. D (Shal) (TC 1.A.1.2) subfamily. Kv4.2/KCND2 sub-subfamily. In terms of assembly, homotetramer or heterotetramer with KCND1 or KCND3. Associates with the regulatory subunits KCNIP2, KCNIP3 and KCNIP4. Interacts with the regulatory subunit KCNIP1; this interaction mediates the capture of both the N- and C-terminus of KCND2, preventing N-type inactivation and stabilizing the S6 conformation, thereby accelerating closed state inactivation and recovery. In vivo, probably exists as heteromeric complex containing variable proportions of KCND1, KCND2, KCND3, KCNIP1, KCNIP2, KCNIP3, KCNIP4, DPP6 and DPP10. The tetrameric channel can associate with up to four regulatory subunits, such as KCNIP2 or KCNIP4. Interaction with four KCNIP4 chains does not reduce interaction with DPP10. Interacts with DLG4 and NCS1/FREQ. Interacts with DLG1. Probably part of a complex consisting of KCNIP1, KCNIP2 isoform 3 and KCND2. Interacts with FLNA, FLNC and DPP10. Interacts (via S1 and S2 helices) with DPP6; this interaction stabilizes the conformation of the S1-S2 helices and facilitates S4 conformational change, including S4 sliding up and down, thereby accelerating activation, inactivation, and recovery. In terms of processing, phosphorylation at Ser-438 in response to MAPK activation is increased in stimulated dendrites. Interaction with KCNIP2 and DPP6 propomtes phosphorylation by PKA at Ser-552. Phosphorylation at Ser-552 has no effect on interaction with KCNIP3, but is required for the regulation of channel activity by KCNIP3. Phosphorylation at Ser-552 leads to KCND2 internalization. Phosphorylated by MAPK in response to signaling via the metabotropic glutamate receptor GRM5. Phosphorylation at Ser-616 is required for the down-regulation of neuronal A-type currents in response to signaling via GRM5. Detected in ovary, in corpus luteum and in granulosa and theca cells in the follicle (at protein level). Highly expressed throughout the brain. Detected in amygdala, caudate nucleus, cerebellum, hippocampus, substantia nigra and thalamus. Expression is not detectable or very low in heart, kidney, liver, lung, pancreas and skeletal muscle. Not detectable in human heart atrium.

It is found in the cell membrane. The protein resides in the cell projection. It localises to the dendrite. The protein localises to the synapse. Its subcellular location is the perikaryon. It is found in the postsynaptic cell membrane. The protein resides in the dendritic spine. It localises to the cell junction. The enzyme catalyses K(+)(in) = K(+)(out). Its function is as follows. Voltage-gated potassium channel that mediates transmembrane potassium transport in excitable membranes, primarily in the brain. Mediates the major part of the dendritic A-type current I(SA) in brain neurons. This current is activated at membrane potentials that are below the threshold for action potentials. It regulates neuronal excitability, prolongs the latency before the first spike in a series of action potentials, regulates the frequency of repetitive action potential firing, shortens the duration of action potentials and regulates the back-propagation of action potentials from the neuronal cell body to the dendrites. Contributes to the regulation of the circadian rhythm of action potential firing in suprachiasmatic nucleus neurons, which regulates the circadian rhythm of locomotor activity. Functions downstream of the metabotropic glutamate receptor GRM5 and plays a role in neuronal excitability and in nociception mediated by activation of GRM5. Mediates the transient outward current I(to) in rodent heart left ventricle apex cells, but not in human heart, where this current is mediated by another family member. Forms tetrameric potassium-selective channels through which potassium ions pass in accordance with their electrochemical gradient. The channel alternates between opened and closed conformations in response to the voltage difference across the membrane. Can form functional homotetrameric channels and heterotetrameric channels that contain variable proportions of KCND2 and KCND3; channel properties depend on the type of pore-forming alpha subunits that are part of the channel. In vivo, membranes probably contain a mixture of heteromeric potassium channel complexes. Interaction with specific isoforms of the regulatory subunits KCNIP1, KCNIP2, KCNIP3 or KCNIP4 strongly increases expression at the cell surface and thereby increases channel activity; it modulates the kinetics of channel activation and inactivation, shifts the threshold for channel activation to more negative voltage values, shifts the threshold for inactivation to less negative voltages and accelerates recovery after inactivation. Likewise, interaction with DPP6 or DPP10 promotes expression at the cell membrane and regulates both channel characteristics and activity. Upon depolarization, the channel goes from a resting closed state (C state) to an activated but non-conducting state (C* state), from there, the channel may either inactivate (I state) or open (O state). The sequence is that of A-type voltage-gated potassium channel KCND2 from Homo sapiens (Human).